Reading from the N-terminus, the 699-residue chain is Macoilin-2 (699 aa).

Transmembrane regions (helical) follow at residues 28–48, 75–95, 120–140, and 154–174; these read TFLYLKFLVVWALVLLADFVL, AFSVFFVCVAFTSDIICLLFI, VCLPTVSLWILFVYIEAAIRF, and FAAHCIGYPVVTLGFGFKSYV. Disordered stretches follow at residues 219-289, 322-411, 432-451, and 679-699; these read AAAA…SILP, LLKD…PNNQ, LQASRQTEQDLRSQLGSLGT, and FMDTSPSGLDPNASVYQPLKK. Asn241, Asn267, Asn345, and Asn365 each carry an N-linked (GlcNAc...) asparagine glycan. Positions 257-271 are enriched in basic and acidic residues; sequence LEYREKERGKNESKK. Residues 329 to 346 show a composition bias toward low complexity; the sequence is SSSSSSTSSNSNKNYKNA. Low complexity predominate over residues 366–382; the sequence is GSVPSSSGPSSSASSSS. Asn690 is a glycosylation site (N-linked (GlcNAc...) asparagine).

Belongs to the macoilin family.

It localises to the nucleus membrane. Its subcellular location is the cell projection. The protein resides in the axon. The protein localises to the rough endoplasmic reticulum membrane. Its function is as follows. May play a role in the regulation of neuronal activity. The protein is Macoilin-2 of Danio rerio (Zebrafish).